Reading from the N-terminus, the 134-residue chain is Phosphoribosyl-AMP cyclohydrolase (134 aa).

D77 is a binding site for Mg(2+). C78 is a binding site for Zn(2+). Positions 79 and 81 each coordinate Mg(2+). 2 residues coordinate Zn(2+): C95 and C102.

Belongs to the PRA-CH family. Homodimer. Mg(2+) is required as a cofactor. The cofactor is Zn(2+).

Its subcellular location is the cytoplasm. The enzyme catalyses 1-(5-phospho-beta-D-ribosyl)-5'-AMP + H2O = 1-(5-phospho-beta-D-ribosyl)-5-[(5-phospho-beta-D-ribosylamino)methylideneamino]imidazole-4-carboxamide. The protein operates within amino-acid biosynthesis; L-histidine biosynthesis; L-histidine from 5-phospho-alpha-D-ribose 1-diphosphate: step 3/9. Its function is as follows. Catalyzes the hydrolysis of the adenine ring of phosphoribosyl-AMP. The sequence is that of Phosphoribosyl-AMP cyclohydrolase from Pseudomonas aeruginosa (strain LESB58).